The chain runs to 362 residues: Carbamoyl phosphate synthase pyrimidine-specific small chain (362 aa).

Positions 1 to 168 (MKRQLILEDG…TRDPYHVPGP (168 aa)) are CPSase. Positions 45, 219, and 221 each coordinate L-glutamine. The Glutamine amidotransferase type-1 domain maps to 171 to 358 (RVVLVDYGMK…IKLMESNKHR (188 aa)). The Nucleophile role is filled by Cys-246. L-glutamine contacts are provided by Leu-247, Gln-250, Asn-288, Gly-290, and Tyr-291. Residues His-331 and Glu-333 contribute to the active site.

The protein belongs to the CarA family. Composed of two chains; the small (or glutamine) chain promotes the hydrolysis of glutamine to ammonia, which is used by the large (or ammonia) chain to synthesize carbamoyl phosphate. Tetramer of heterodimers (alpha,beta)4.

It catalyses the reaction hydrogencarbonate + L-glutamine + 2 ATP + H2O = carbamoyl phosphate + L-glutamate + 2 ADP + phosphate + 2 H(+). The catalysed reaction is L-glutamine + H2O = L-glutamate + NH4(+). It functions in the pathway pyrimidine metabolism; UMP biosynthesis via de novo pathway; (S)-dihydroorotate from bicarbonate: step 1/3. Small subunit of the glutamine-dependent carbamoyl phosphate synthetase (CPSase). CPSase catalyzes the formation of carbamoyl phosphate from the ammonia moiety of glutamine, carbonate, and phosphate donated by ATP, constituting the first step of the biosynthetic pathway leading to pyrimidine nucleotides. The small subunit (glutamine amidotransferase) binds and cleaves glutamine to supply the large subunit with the substrate ammonia. The protein is Carbamoyl phosphate synthase pyrimidine-specific small chain of Halalkalibacterium halodurans (strain ATCC BAA-125 / DSM 18197 / FERM 7344 / JCM 9153 / C-125) (Bacillus halodurans).